Here is a 405-residue protein sequence, read N- to C-terminus: Tyrosine--tRNA ligase (405 aa).

Residue Tyr-35 participates in L-tyrosine binding. Positions Thr-40–His-49 match the 'HIGH' region motif. Positions 166 and 170 each coordinate L-tyrosine. The 'KMSKS' region motif lies at Lys-226–Ser-230. Lys-229 serves as a coordination point for ATP. Residues Ile-340–Val-404 enclose the S4 RNA-binding domain.

This sequence belongs to the class-I aminoacyl-tRNA synthetase family. TyrS type 1 subfamily. In terms of assembly, homodimer.

The protein localises to the cytoplasm. It catalyses the reaction tRNA(Tyr) + L-tyrosine + ATP = L-tyrosyl-tRNA(Tyr) + AMP + diphosphate + H(+). Catalyzes the attachment of tyrosine to tRNA(Tyr) in a two-step reaction: tyrosine is first activated by ATP to form Tyr-AMP and then transferred to the acceptor end of tRNA(Tyr). This chain is Tyrosine--tRNA ligase, found in Borrelia garinii subsp. bavariensis (strain ATCC BAA-2496 / DSM 23469 / PBi) (Borreliella bavariensis).